We begin with the raw amino-acid sequence, 591 residues long: PDZ and LIM domain protein 5 (591 aa).

Residue serine 2 is modified to N-acetylserine. Serine 2 bears the Phosphoserine mark. A PDZ domain is found at 2–85 (SNYNVSLVGP…SLNMTLQRAS (84 aa)). Lysine 89 carries the N6-acetyllysine; alternate modification. N6-succinyllysine; alternate is present on lysine 89. Lysine 89 is covalently cross-linked (Glycyl lysine isopeptide (Lys-Gly) (interchain with G-Cter in SUMO2); alternate). 3 positions are modified to phosphoserine: serine 111, serine 134, and serine 137. Disordered stretches follow at residues 125-240 (YNKV…GPPR) and 255-334 (THSD…SNRP). Residues 134–143 (SVSSPKVTSI) are compositionally biased toward polar residues. Positions 144 to 161 (PSPSSAFTPAHAATSSHA) are enriched in low complexity. The span at 162–174 (SPPPVAAVTPPPL) shows a compositional bias: pro residues. 2 stretches are compositionally biased toward polar residues: residues 183–195 (ANPSAAQCSSPPN) and 207–217 (PTVTSVCSESA). 2 positions are modified to phosphoserine: serine 228 and serine 260. Composition is skewed to basic and acidic residues over residues 258–273 (DASKKRLIEDTEDWRP) and 293–304 (EHLKESENDNAK). Over residues 310–329 (PEPSQQSASPLSAAESLESP) the composition is skewed to low complexity. Serine 313 and serine 318 each carry phosphoserine. Position 346 is an N6-acetyllysine (lysine 346). Residues 348-398 (VGSTSVKSPSWQRPNQAAPSTGRISNSASSSGTGAPMKPAVGPPQPSDQDT) form a disordered region. Over residues 349–380 (GSTSVKSPSWQRPNQAAPSTGRISNSASSSGT) the composition is skewed to polar residues. Phosphoserine occurs at positions 355 and 357. 3 LIM zinc-binding domains span residues 413 to 472 (PMCA…FFAP), 472 to 531 (PECG…LFGT), and 531 to 591 (TICR…SVNF).

Interacts with various PKC isoforms through the LIM domains. Interacts with actin and alpha-actinin through the PDZ domain. Interacts (via LIM domains) with SIPA1L1/SPAR; this interaction may occur preferentially with isoform 1. In terms of tissue distribution, detected in brain, in neurons, including in hippocampal neurons, and glial cells (at protein level). Detected in heart and skeletal muscle.

The protein resides in the postsynaptic density. It is found in the presynapse. The protein localises to the postsynapse. It localises to the cytoplasm. Its subcellular location is the cytosol. May play an important role in the heart development by scaffolding PKC to the Z-disk region. May play a role in the regulation of cardiomyocyte expansion. Isoforms lacking the LIM domains may negatively modulate the scaffolding activity of isoform 1. Overexpression promotes the development of heart hypertrophy. Contributes to the regulation of dendritic spine morphogenesis in neurons. May be required to restrain postsynaptic growth of excitatory synapses. Isoform 1, but not isoform 2, expression favors spine thinning and elongation. The protein is PDZ and LIM domain protein 5 (Pdlim5) of Rattus norvegicus (Rat).